The sequence spans 3587 residues: Surfactin synthase subunit 1 (3587 aa).

Carrier domains follow at residues 971 to 1046, 2010 to 2085, and 3038 to 3112; these read APRN…DHRE, APRN…ASAE, and APTT…ERAE. Ser1006, Ser2045, and Ser3073 each carry O-(pantetheine 4'-phosphoryl)serine.

The protein belongs to the ATP-dependent AMP-binding enzyme family. Pantetheine 4'-phosphate serves as cofactor.

Its pathway is antibiotic biosynthesis; surfactin biosynthesis. In terms of biological role, this protein is a multifunctional enzyme able to activate and polymerize the amino acids Leu, Glu, Asp and Val. Activation sites for these AA consist of individual domains. This is Surfactin synthase subunit 1 (srfAA) from Bacillus subtilis (strain 168).